We begin with the raw amino-acid sequence, 541 residues long: Chaperonin GroEL 2 (541 aa).

Residues 29 to 32 and 86 to 90 each bind ATP; these read TLGP and DGTTT. Lys132 is covalently cross-linked (Isoglutamyl lysine isopeptide (Lys-Gln) (interchain with Q-Cter in protein Pup)). Residues Gly413, 476 to 478, and Asp492 each bind ATP; that span reads NAA.

The protein belongs to the chaperonin (HSP60) family. As to quaternary structure, forms a cylinder of 14 subunits composed of two heptameric rings stacked back-to-back. Interacts with the co-chaperonin GroES.

The protein resides in the secreted. The protein localises to the capsule. It localises to the cell surface. It is found in the cell wall. The enzyme catalyses ATP + H2O + a folded polypeptide = ADP + phosphate + an unfolded polypeptide.. Together with its co-chaperonin GroES, plays an essential role in assisting protein folding. The GroEL-GroES system forms a nano-cage that allows encapsulation of the non-native substrate proteins and provides a physical environment optimized to promote and accelerate protein folding. In Mycolicibacterium smegmatis (strain ATCC 700084 / mc(2)155) (Mycobacterium smegmatis), this protein is Chaperonin GroEL 2.